A 989-amino-acid chain; its full sequence is Presequence protease, mitochondrial (989 aa).

Residues 1–16 (MLRFQRFASSYAQAQA) constitute a mitochondrion transit peptide. Zn(2+) is bound at residue H84. The active-site Proton acceptor is the E87. Zn(2+) is bound at residue H88. Residue E160 is part of the active site. E185 is a Zn(2+) binding site. Residue S920 is modified to Phosphoserine. 972–979 (GPGIEGKT) is an ATP binding site.

This sequence belongs to the peptidase M16 family. PreP subfamily. Monomer and homodimer; homodimerization is induced by binding of the substrate. Zn(2+) serves as cofactor.

Its subcellular location is the mitochondrion intermembrane space. The protein resides in the mitochondrion matrix. With respect to regulation, activated by nucleotides, including ATP, GTP, CTP, UTP, and ADP. Activated by copper, manganese, calcium and magnesium ions; copper and manganese restore activity following inactivation by EDTA (ethylenediaminetetraacetic acid). Inhibited by metal chelators including EDTA, EGTA (ethylene glycol bis(2-aminoethyl)tetraacetic acid), and 1,10-phenanthroline. Inhibited by copper, zinc, and iron ions. Also inhibited by dithiothreitol p-mercuribenzenesulfonic acid, N-ethylmaleimide, protoporphyrin, hemin, protamine and triarginine. In terms of biological role, degrades mitochondrial transit peptides after their cleavage in the intermembrane space or in the matrix, and presequence peptides; clearance of these peptides is required to keep the presequence processing machinery running. Preferentially cleaves the N-terminal side of paired basic amino acid residues. Also degrades other unstructured peptides. May function as an ATP-dependent peptidase as opposed to a metalloendopeptidase. In Saccharomyces cerevisiae (strain ATCC 204508 / S288c) (Baker's yeast), this protein is Presequence protease, mitochondrial.